The primary structure comprises 417 residues: Serine--tRNA ligase (417 aa).

232 to 234 (TAE) is an L-serine binding site. ATP contacts are provided by residues 263 to 265 (RRE) and Val279. Glu286 serves as a coordination point for L-serine. An ATP-binding site is contributed by 350 to 353 (EISS). L-serine is bound at residue Ser385.

Belongs to the class-II aminoacyl-tRNA synthetase family. Type-1 seryl-tRNA synthetase subfamily. In terms of assembly, homodimer. The tRNA molecule binds across the dimer.

The protein resides in the cytoplasm. It catalyses the reaction tRNA(Ser) + L-serine + ATP = L-seryl-tRNA(Ser) + AMP + diphosphate + H(+). The catalysed reaction is tRNA(Sec) + L-serine + ATP = L-seryl-tRNA(Sec) + AMP + diphosphate + H(+). The protein operates within aminoacyl-tRNA biosynthesis; selenocysteinyl-tRNA(Sec) biosynthesis; L-seryl-tRNA(Sec) from L-serine and tRNA(Sec): step 1/1. In terms of biological role, catalyzes the attachment of serine to tRNA(Ser). Is also able to aminoacylate tRNA(Sec) with serine, to form the misacylated tRNA L-seryl-tRNA(Sec), which will be further converted into selenocysteinyl-tRNA(Sec). The sequence is that of Serine--tRNA ligase from Leptospira borgpetersenii serovar Hardjo-bovis (strain JB197).